A 448-amino-acid polypeptide reads, in one-letter code: Tubulin alpha-4A chain (448 aa).

The short motif at 1-4 (MREC) is the MREC motif element. Residue Q11 participates in GTP binding. Position 40 is an N6-acetyllysine (K40). S48 is subject to Phosphoserine. E71 contacts GTP. E71 lines the Mg(2+) pocket. Position 83 is a 3'-nitrotyrosine (Y83). Residues S140, G144, T145, T179, N206, and N228 each coordinate GTP. Residue E254 is part of the active site. A Phosphotyrosine modification is found at Y432. A Phosphoserine modification is found at S439.

This sequence belongs to the tubulin family. In terms of assembly, dimer of alpha and beta chains. A typical microtubule is a hollow water-filled tube with an outer diameter of 25 nm and an inner diameter of 15 nM. Alpha-beta heterodimers associate head-to-tail to form protofilaments running lengthwise along the microtubule wall with the beta-tubulin subunit facing the microtubule plus end conferring a structural polarity. Microtubules usually have 13 protofilaments but different protofilament numbers can be found in some organisms and specialized cells. Interacts with CFAP157. It depends on Mg(2+) as a cofactor. In terms of processing, some glutamate residues at the C-terminus are polyglycylated, resulting in polyglycine chains on the gamma-carboxyl group. Glycylation is mainly limited to tubulin incorporated into axonemes (cilia and flagella) whereas glutamylation is prevalent in neuronal cells, centrioles, axonemes, and the mitotic spindle. Both modifications can coexist on the same protein on adjacent residues, and lowering polyglycylation levels increases polyglutamylation, and reciprocally. Cilia and flagella glycylation is required for their stability and maintenance. Flagella glycylation controls sperm motility. Some glutamate residues at the C-terminus are polyglutamylated, resulting in polyglutamate chains on the gamma-carboxyl group. Polyglutamylation plays a key role in microtubule severing by spastin (SPAST). SPAST preferentially recognizes and acts on microtubules decorated with short polyglutamate tails: severing activity by SPAST increases as the number of glutamates per tubulin rises from one to eight, but decreases beyond this glutamylation threshold. Glutamylation is also involved in cilia motility. Post-translationally, acetylation of alpha chains at Lys-40 is located inside the microtubule lumen. This modification has been correlated with increased microtubule stability, intracellular transport and ciliary assembly. In terms of processing, methylation of alpha chains at Lys-40 is found in mitotic microtubules and is required for normal mitosis and cytokinesis contributing to genomic stability. Although this tubulin does not encode a C-terminal tyrosine, a C-terminal tyrosine can be added post-translationally by the tubulin tyrosine ligase (TTL). It can then undergo a detyrosination cycle by the tubulin tyrosine carboxypeptidase (MATCAP1/KIAA0895L).

It is found in the cytoplasm. It localises to the cytoskeleton. It catalyses the reaction GTP + H2O = GDP + phosphate + H(+). Its function is as follows. Tubulin is the major constituent of microtubules, a cylinder consisting of laterally associated linear protofilaments composed of alpha- and beta-tubulin heterodimers. Microtubules grow by the addition of GTP-tubulin dimers to the microtubule end, where a stabilizing cap forms. Below the cap, tubulin dimers are in GDP-bound state, owing to GTPase activity of alpha-tubulin. The polypeptide is Tubulin alpha-4A chain (TUBA4A) (Macaca fascicularis (Crab-eating macaque)).